Reading from the N-terminus, the 512-residue chain is Histidine ammonia-lyase (512 aa).

A cross-link (5-imidazolinone (Ala-Gly)) is located at residues 143–145; sequence ASG. Serine 144 carries the 2,3-didehydroalanine (Ser) modification.

It belongs to the PAL/histidase family. In terms of processing, contains an active site 4-methylidene-imidazol-5-one (MIO), which is formed autocatalytically by cyclization and dehydration of residues Ala-Ser-Gly.

The protein localises to the cytoplasm. The catalysed reaction is L-histidine = trans-urocanate + NH4(+). It participates in amino-acid degradation; L-histidine degradation into L-glutamate; N-formimidoyl-L-glutamate from L-histidine: step 1/3. The chain is Histidine ammonia-lyase from Ruegeria pomeroyi (strain ATCC 700808 / DSM 15171 / DSS-3) (Silicibacter pomeroyi).